The primary structure comprises 402 residues: 2,3-bisphosphoglycerate-independent phosphoglycerate mutase 2 (402 aa).

It belongs to the BPG-independent phosphoglycerate mutase family. A-PGAM subfamily.

It carries out the reaction (2R)-2-phosphoglycerate = (2R)-3-phosphoglycerate. Its pathway is carbohydrate degradation; glycolysis; pyruvate from D-glyceraldehyde 3-phosphate: step 3/5. Catalyzes the interconversion of 2-phosphoglycerate and 3-phosphoglycerate. This chain is 2,3-bisphosphoglycerate-independent phosphoglycerate mutase 2 (apgM2), found in Methanothermobacter thermautotrophicus (strain ATCC 29096 / DSM 1053 / JCM 10044 / NBRC 100330 / Delta H) (Methanobacterium thermoautotrophicum).